Consider the following 114-residue polypeptide: Small ribosomal subunit protein uS17 (114 aa).

The protein belongs to the universal ribosomal protein uS17 family. As to quaternary structure, part of the 30S ribosomal subunit.

Its function is as follows. One of the primary rRNA binding proteins, it binds specifically to the 5'-end of 16S ribosomal RNA. This chain is Small ribosomal subunit protein uS17, found in Aeropyrum pernix (strain ATCC 700893 / DSM 11879 / JCM 9820 / NBRC 100138 / K1).